The chain runs to 72 residues: SPbeta prophage-derived uncharacterized protein YoqN (72 aa).

The polypeptide is SPbeta prophage-derived uncharacterized protein YoqN (yoqN) (Bacillus subtilis (strain 168)).